An 800-amino-acid chain; its full sequence is MSEIIQDLSLEDVIGDRFGRYSKYIIQERALPDVRDGLKPVQRRILFAMYSSGNTYDKNFRKSAKTVGDVIGQYHPHGDSSVYDAMVRLSQDWKLRHVLIEMHGNNGSIDNDPPAAMRYTEAKLSQLSEELLRDINKETVSFIPNYDDTTLEPMVLPARFPNLLINGSTGISSGYATDIPPHNLAEVIQGTLKYIDQPDITINQLMKYIKGPDFPTGGIIQGIEGIKKAYETGKGKVVVRSRVDEEPLRSGRKQLIVTEIPYEVNKSSLVKKIDELRADKKVDGIVEVRDETDRTGLRIAIELKKDANSESIKNYLYKNSDLQISYNFNMVAISEGRPKLMGLREIIESYLNHQIEVVTNRTRYDLEQAEKRMHIVEGLMKALSILDEVIALIRNSKNKKDAKDNLVAEYDFTEAQAEAIVMLQLYRLTNTDIEALKKEHEELEALIKELRNILDNHEALLAVIKDELNEIKKKFKVDRLSTIEAEISEIKIDKEVMVPSEEVILSLTQHGYIKRTSTRSFNASGVTEIGLKDGDRLLKHESVNTQDTVLVFTNKGRYLFIPVHKLADIRWKELGQHISQIVPIDEDEEVVNVYNEKDFKNEAFYIMATKNGMIKKSSASQFKTTRFNKPLINMKVKDKDELINVVRLESDQLITVLTHKGMSLTYSTNELSDTGLRAAGVKSINLKDEDYVVMTEDVNDSDSIIMVTQRGAMKRIDFNVLQEAKRAQRGITLLKELKKKPHRIVAGAVVKENHTKYIVFSQHHEEYGNIDDVHLSEQYTNGSFIIDTDDFGEVESMILE.

The 466-residue stretch at 31–496 folds into the Topo IIA-type catalytic domain; it reads LPDVRDGLKP…ISEIKIDKEV (466 aa). Catalysis depends on Y119, which acts as the O-(5'-phospho-DNA)-tyrosine intermediate.

The protein belongs to the type II topoisomerase GyrA/ParC subunit family. ParC type 2 subfamily. As to quaternary structure, heterotetramer composed of ParC and ParE.

It localises to the cell membrane. The enzyme catalyses ATP-dependent breakage, passage and rejoining of double-stranded DNA.. Its function is as follows. Topoisomerase IV is essential for chromosome segregation. It relaxes supercoiled DNA. Performs the decatenation events required during the replication of a circular DNA molecule. The chain is DNA topoisomerase 4 subunit A from Staphylococcus epidermidis (strain ATCC 12228 / FDA PCI 1200).